Reading from the N-terminus, the 274-residue chain is Large ribosomal subunit protein uL2 (274 aa).

The tract at residues 222–274 (GVAMNPVDHPHGGGEGRGKGHHPQSPWGQLAKGYKTRRGKKASDKLIVRRRNG) is disordered. Over residues 229 to 239 (DHPHGGGEGRG) the composition is skewed to basic and acidic residues.

The protein belongs to the universal ribosomal protein uL2 family. In terms of assembly, part of the 50S ribosomal subunit. Forms a bridge to the 30S subunit in the 70S ribosome.

In terms of biological role, one of the primary rRNA binding proteins. Required for association of the 30S and 50S subunits to form the 70S ribosome, for tRNA binding and peptide bond formation. It has been suggested to have peptidyltransferase activity; this is somewhat controversial. Makes several contacts with the 16S rRNA in the 70S ribosome. This chain is Large ribosomal subunit protein uL2, found in Thermosipho africanus (strain TCF52B).